Here is a 204-residue protein sequence, read N- to C-terminus: Protein-L-isoaspartate O-methyltransferase (204 aa).

This sequence belongs to the methyltransferase superfamily. L-isoaspartyl/D-aspartyl protein methyltransferase family. Monomer.

The protein localises to the cytoplasm. The catalysed reaction is [protein]-L-isoaspartate + S-adenosyl-L-methionine = [protein]-L-isoaspartate alpha-methyl ester + S-adenosyl-L-homocysteine. Its function is as follows. Catalyzes the methyl esterification of L-isoaspartyl residues in peptides and proteins that result from spontaneous decomposition of normal L-aspartyl and L-asparaginyl residues. It plays a role in the repair and/or degradation of damaged proteins. In Rhizobium meliloti (strain 1021) (Ensifer meliloti), this protein is Protein-L-isoaspartate O-methyltransferase (pcm).